The following is a 430-amino-acid chain: Histidine--tRNA ligase (430 aa).

It belongs to the class-II aminoacyl-tRNA synthetase family. Homodimer.

The protein resides in the cytoplasm. It catalyses the reaction tRNA(His) + L-histidine + ATP = L-histidyl-tRNA(His) + AMP + diphosphate + H(+). The chain is Histidine--tRNA ligase from Anaplasma marginale (strain Florida).